A 217-amino-acid chain; its full sequence is Large ribosomal subunit protein uL1 (217 aa).

Belongs to the universal ribosomal protein uL1 family. In terms of assembly, part of the 50S ribosomal subunit.

Binds directly to 23S rRNA. Probably involved in E site tRNA release. Functionally, protein L1 is also a translational repressor protein, it controls the translation of its operon by binding to its mRNA. In Thermoplasma acidophilum (strain ATCC 25905 / DSM 1728 / JCM 9062 / NBRC 15155 / AMRC-C165), this protein is Large ribosomal subunit protein uL1.